We begin with the raw amino-acid sequence, 162 residues long: MTLGDTLFTLVTFLVLMLAVGKVAWKPVSKMMADRQQKISGDLDYAEKSRKDADALVAKRQEELQHSQADAVKIVNQAKENGEKLRQSLVDAANAEVTTMKKNAQTEIDQARKDALASAKNDVADLSLTIAQKLIGKELNADDQKGLIDDYIKRLGDANGSH.

The helical transmembrane segment at 6–25 threads the bilayer; the sequence is TLFTLVTFLVLMLAVGKVAW.

Belongs to the ATPase B chain family. F-type ATPases have 2 components, F(1) - the catalytic core - and F(0) - the membrane proton channel. F(1) has five subunits: alpha(3), beta(3), gamma(1), delta(1), epsilon(1). F(0) has three main subunits: a(1), b(2) and c(10-14). The alpha and beta chains form an alternating ring which encloses part of the gamma chain. F(1) is attached to F(0) by a central stalk formed by the gamma and epsilon chains, while a peripheral stalk is formed by the delta and b chains.

Its subcellular location is the cell membrane. In terms of biological role, f(1)F(0) ATP synthase produces ATP from ADP in the presence of a proton or sodium gradient. F-type ATPases consist of two structural domains, F(1) containing the extramembraneous catalytic core and F(0) containing the membrane proton channel, linked together by a central stalk and a peripheral stalk. During catalysis, ATP synthesis in the catalytic domain of F(1) is coupled via a rotary mechanism of the central stalk subunits to proton translocation. Its function is as follows. Component of the F(0) channel, it forms part of the peripheral stalk, linking F(1) to F(0). In Lacticaseibacillus paracasei (strain ATCC 334 / BCRC 17002 / CCUG 31169 / CIP 107868 / KCTC 3260 / NRRL B-441) (Lactobacillus paracasei), this protein is ATP synthase subunit b.